Reading from the N-terminus, the 773-residue chain is DNA gyrase subunit B (773 aa).

The Toprim domain maps to 416–530 (SEIFLVEGDS…QGHVYIAQAP (115 aa)). Positions 422, 495, and 497 each coordinate Mg(2+).

It belongs to the type II topoisomerase GyrB family. Heterotetramer, composed of two GyrA and two GyrB chains. In the heterotetramer, GyrA contains the active site tyrosine that forms a transient covalent intermediate with DNA, while GyrB binds cofactors and catalyzes ATP hydrolysis. Requires Mg(2+) as cofactor. Mn(2+) serves as cofactor. The cofactor is Ca(2+).

It is found in the cytoplasm. It catalyses the reaction ATP-dependent breakage, passage and rejoining of double-stranded DNA.. Its function is as follows. A type II topoisomerase that negatively supercoils closed circular double-stranded (ds) DNA in an ATP-dependent manner to modulate DNA topology and maintain chromosomes in an underwound state. Negative supercoiling favors strand separation, and DNA replication, transcription, recombination and repair, all of which involve strand separation. Also able to catalyze the interconversion of other topological isomers of dsDNA rings, including catenanes and knotted rings. Type II topoisomerases break and join 2 DNA strands simultaneously in an ATP-dependent manner. This is DNA gyrase subunit B from Helicobacter pylori (strain ATCC 700392 / 26695) (Campylobacter pylori).